Here is a 550-residue protein sequence, read N- to C-terminus: Retron Ec78 probable ATPase (550 aa).

Positions Gly93 to Thr100 match the ATP-binding motif.

Its function is as follows. Probable ATPase component of antiviral defense system retron Ec78, composed of a non-coding RNA (ncRNA), a reverse transcriptase (RT), this protein and a putative HNH endonuclease. Expression of retron Ec78 confers protection against bacteriophage T5. At multiplicity of infection (MOI) of 0.02 cultures slow growth when infected with T5 but do not collapse, at MOI 2 cultures enter growth stasis. The protein is Retron Ec78 probable ATPase of Escherichia coli.